A 598-amino-acid chain; its full sequence is Potassium voltage-gated channel subfamily A member 5 (598 aa).

The tract at residues 1–89 (MEIALGPLEN…EEGEGDPGLS (89 aa)) is disordered. Residues 1-195 (MEIALGPLEN…FYQLGDEAME (195 aa)) form a tetramerization domain region. Topologically, residues 1 to 231 (MEIALGPLEN…LIFEYPESSG (231 aa)) are cytoplasmic. A compositionally biased stretch (pro residues) spans 60 to 69 (RPLPPQPPEL). Residue Lys205 forms a Glycyl lysine isopeptide (Lys-Gly) (interchain with G-Cter in SUMO) linkage. The chain crosses the membrane as a helical span at residues 232–253 (SARAIAIVSVLVILISIITFCL). The Extracellular portion of the chain corresponds to 254–308 (ETLPEFKDERELLRHPPVPHQPPAAPALGANGSGAVAPASGSTVAPLLPRTLADP). Residues 309 to 330 (FFIVETTCVIWFTFELLVRFFA) traverse the membrane as a helical segment. Cys331 carries S-palmitoyl cysteine lipidation. Topologically, residues 331 to 341 (CPSKAEFSRNI) are cytoplasmic. The helical transmembrane segment at 342–362 (MNIIDIVAIFPYFITLGTELA) threads the bilayer. The Extracellular portion of the chain corresponds to 363–380 (EQQPGGGGGGQNGQQAMS). The chain crosses the membrane as a helical; Voltage-sensor span at residues 381 to 401 (LAILRVIRLVRVFRIFKLSRH). Residues 402 to 416 (SKGLQILGKTLQASM) lie on the Cytoplasmic side of the membrane. An S4-S5 linker region spans residues 403-416 (KGLQILGKTLQASM). The chain crosses the membrane as a helical span at residues 417–438 (RELGLLIFFLFIGVILFSSAVY). Residues 439-452 (FAEADNQGTHFSSI) lie on the Extracellular side of the membrane. Residues 453 to 464 (PDAFWWAVVTMT) constitute an intramembrane region (helical). Residues 465–470 (TVGYGD) carry the Selectivity filter motif. Residues 465 to 472 (TVGYGDMR) lie within the membrane without spanning it. A helical transmembrane segment spans residues 480–508 (IVGSLCAIAGVLTIALPVPVIVSNFNYFY). Topologically, residues 509–598 (HRETDHEEQA…CLDTSRETDL (90 aa)) are cytoplasmic. The disordered stretch occupies residues 517–539 (QAALKEEPGSQSRGTSLDAGGQR). Lys521 is covalently cross-linked (Glycyl lysine isopeptide (Lys-Gly) (interchain with G-Cter in SUMO)). The short motif at 596-598 (TDL) is the PDZ-binding element.

The protein belongs to the potassium channel family. A (Shaker) (TC 1.A.1.2) subfamily. Kv1.5/KCNA5 sub-subfamily. As to quaternary structure, homotetramer and heterotetramer of potassium channel proteins. Interacts with DLG1, which enhances channel currents. Forms a ternary complex with DLG1 and CAV3. Interacts with KCNAB1. Interacts with UBE2I. Interacts with XIRP2; the interaction is required for normal action potential configuration in the heart. Glycosylated. In terms of processing, sumoylated on Lys-205, and Lys-521, preferentially with SUMO3. Sumoylation regulates the voltage sensitivity of the channel.

Its subcellular location is the cell membrane. It catalyses the reaction K(+)(in) = K(+)(out). Voltage-gated potassium channel that mediates transmembrane potassium transport in excitable membranes. Forms tetrameric potassium-selective channels through which potassium ions pass in accordance with their electrochemical gradient. The channel alternates between opened and closed conformations in response to the voltage difference across the membrane. Can form functional homotetrameric channels and heterotetrameric channels that contain variable proportions of KCNA1, KCNA2, KCNA4, KCNA5, and possibly other family members as well; channel properties depend on the type of alpha subunits that are part of the channel. Channel properties are modulated by cytoplasmic beta subunits that regulate the subcellular location of the alpha subunits and promote rapid inactivation. Homotetrameric channels display rapid activation and slow inactivation. Required for normal electrical conduction including formation of the infranodal ventricular conduction system and normal action potential configuration, as a result of its interaction with XIRP2. May play a role in regulating the secretion of insulin in normal pancreatic islets. The chain is Potassium voltage-gated channel subfamily A member 5 (KCNA5) from Oryctolagus cuniculus (Rabbit).